Reading from the N-terminus, the 742-residue chain is Glycine--tRNA ligase (742 aa).

In terms of domain architecture, WHEP-TRS spans 73-129 (KLAPLRAAVKEYGDLIRDLKAKGAPKIDIDKAVVELKARKRLLEDTEIALAPKEASF). Residue E309 participates in glycine binding. ATP is bound by residues 341–343 (RNE) and 352–353 (RV). E360 contacts glycine. 467 to 468 (EC) contacts ATP. Residue 586–588 (EPS) coordinates glycine. Residue R593 participates in ATP binding.

This sequence belongs to the class-II aminoacyl-tRNA synthetase family. In terms of assembly, homodimer.

It localises to the cytoplasm. Its subcellular location is the cell projection. The protein localises to the axon. It is found in the secreted. The protein resides in the extracellular exosome. The catalysed reaction is tRNA(Gly) + glycine + ATP = glycyl-tRNA(Gly) + AMP + diphosphate. It carries out the reaction 2 ATP + H(+) = P(1),P(4)-bis(5'-adenosyl) tetraphosphate + diphosphate. Catalyzes the ATP-dependent ligation of glycine to the 3'-end of its cognate tRNA, via the formation of an aminoacyl-adenylate intermediate (Gly-AMP). Also produces diadenosine tetraphosphate (Ap4A), a universal pleiotropic signaling molecule needed for cell regulation pathways, by direct condensation of 2 ATPs. Thereby, may play a special role in Ap4A homeostasis. This chain is Glycine--tRNA ligase, found in Caenorhabditis elegans.